An 87-amino-acid chain; its full sequence is Small ribosomal subunit protein bS18 (87 aa).

A compositionally biased stretch (basic and acidic residues) spans 1 to 10 (MAGKSSGDRR). The interval 1 to 23 (MAGKSSGDRRKPLRGAKGGKNAA) is disordered.

Belongs to the bacterial ribosomal protein bS18 family. As to quaternary structure, part of the 30S ribosomal subunit. Forms a tight heterodimer with protein bS6.

Its function is as follows. Binds as a heterodimer with protein bS6 to the central domain of the 16S rRNA, where it helps stabilize the platform of the 30S subunit. In Clavibacter michiganensis subsp. michiganensis (strain NCPPB 382), this protein is Small ribosomal subunit protein bS18.